Consider the following 31-residue polypeptide: Elongation factor Tu (31 aa).

Belongs to the GTP-binding elongation factor family. EF-Tu/EF-1A subfamily. Monomer.

The protein localises to the cytoplasm. This protein promotes the GTP-dependent binding of aminoacyl-tRNA to the A-site of ribosomes during protein biosynthesis. This chain is Elongation factor Tu (tuf), found in Streptomyces laurentii.